We begin with the raw amino-acid sequence, 93 residues long: Small ribosomal subunit protein uS19c (93 aa).

It belongs to the universal ribosomal protein uS19 family.

The protein localises to the plastid. It is found in the chloroplast. In terms of biological role, protein S19 forms a complex with S13 that binds strongly to the 16S ribosomal RNA. In Lolium perenne (Perennial ryegrass), this protein is Small ribosomal subunit protein uS19c.